The sequence spans 51 residues: Large ribosomal subunit protein eL39 (51 aa).

This sequence belongs to the eukaryotic ribosomal protein eL39 family. In terms of assembly, interacts with impact.

This is Large ribosomal subunit protein eL39 (rpl39) from Ictalurus punctatus (Channel catfish).